The following is a 157-amino-acid chain: NAD(P)H-quinone oxidoreductase subunit N (157 aa).

The protein belongs to the complex I NdhN subunit family. In terms of assembly, NDH-1 can be composed of about 15 different subunits; different subcomplexes with different compositions have been identified which probably have different functions.

It localises to the cellular thylakoid membrane. The catalysed reaction is a plastoquinone + NADH + (n+1) H(+)(in) = a plastoquinol + NAD(+) + n H(+)(out). The enzyme catalyses a plastoquinone + NADPH + (n+1) H(+)(in) = a plastoquinol + NADP(+) + n H(+)(out). In terms of biological role, NDH-1 shuttles electrons from an unknown electron donor, via FMN and iron-sulfur (Fe-S) centers, to quinones in the respiratory and/or the photosynthetic chain. The immediate electron acceptor for the enzyme in this species is believed to be plastoquinone. Couples the redox reaction to proton translocation, and thus conserves the redox energy in a proton gradient. Cyanobacterial NDH-1 also plays a role in inorganic carbon-concentration. The protein is NAD(P)H-quinone oxidoreductase subunit N of Synechococcus sp. (strain CC9902).